The primary structure comprises 296 residues: Glycine--tRNA ligase alpha subunit (296 aa).

This sequence belongs to the class-II aminoacyl-tRNA synthetase family. Tetramer of two alpha and two beta subunits.

The protein resides in the cytoplasm. The catalysed reaction is tRNA(Gly) + glycine + ATP = glycyl-tRNA(Gly) + AMP + diphosphate. The chain is Glycine--tRNA ligase alpha subunit from Listeria innocua serovar 6a (strain ATCC BAA-680 / CLIP 11262).